We begin with the raw amino-acid sequence, 421 residues long: Forkhead box protein fkh-4 (421 aa).

Positions 118 to 218 form a DNA-binding region, fork-head; the sequence is RPPISYVALC…SDADFDFFRK (101 aa).

Its subcellular location is the nucleus. Its function is as follows. Transcription factor. Regulates expression of a class of small RNAs, known as 21U-RNAs, perhaps acting redundantly with fkh-3 and fkh-5. This chain is Forkhead box protein fkh-4, found in Caenorhabditis elegans.